A 333-amino-acid polypeptide reads, in one-letter code: Taste receptor type 2 member 38 (333 aa).

Residues 1–17 are Extracellular-facing; that stretch reads MLTLTHICTVSYEVRST. The helical transmembrane segment at 18–38 threads the bilayer; that stretch reads FLFISVLEFAVGFLTNAFISL. At 39 to 55 the chain is on the cytoplasmic side; sequence VNFWDVVKRQPLSNSDC. The helical transmembrane segment at 56–76 threads the bilayer; sequence VLLCLSISRLFLHGLLFLSAI. The Extracellular segment spans residues 77-94; the sequence is QLTHFQKLSEPLNHSYQV. The chain crosses the membrane as a helical span at residues 95–115; that stretch reads ILMLWMIANQANLWLAACLSL. The Cytoplasmic segment spans residues 116-142; the sequence is LYCSKLIRFSHTFLICLASWVSRKISQ. Residues 143-163 form a helical membrane-spanning segment; that stretch reads MLLGIILCSCICTVLCVWCFF. Residues 164–190 lie on the Extracellular side of the membrane; the sequence is GRLHFTVTTVLFMNNNTRLNWQIKDLN. Asn-178 carries an N-linked (GlcNAc...) asparagine glycan. The helical transmembrane segment at 191-211 threads the bilayer; it reads LFYSFLFCYLWSVPPFLLFLV. Over 212–251 the chain is Cytoplasmic; it reads SSGMLTVSLGRHMRTMKVYTRDSRDPSLEAHIKALKSLVS. Residues 252 to 272 traverse the membrane as a helical segment; that stretch reads FFCFFVISSCAAFISVPLLIL. Residues 273–276 lie on the Extracellular side of the membrane; the sequence is WHDK. A helical membrane pass occupies residues 277 to 297; sequence IGVMVCVGIMAACPSGHAAVL. Over 298–333 the chain is Cytoplasmic; that stretch reads ISGNAKLRRAVTTILLWAQSSLKVRADHMADSRTLC.

This sequence belongs to the G-protein coupled receptor T2R family.

It localises to the membrane. Functionally, receptor that may play a role in the perception of bitterness and is gustducin-linked. May play a role in sensing the chemical composition of the gastrointestinal content. The activity of this receptor may stimulate alpha gustducin, mediate PLC-beta-2 activation and lead to the gating of TRPM5. In Papio hamadryas (Hamadryas baboon), this protein is Taste receptor type 2 member 38 (TAS2R38).